The sequence spans 539 residues: Lysophospholipid acyltransferase LPEAT2 (539 aa).

The helical transmembrane segment at 93-113 (LVICLPIALIRLVLFAASLAV) threads the bilayer. The short motif at 178–183 (HVSYIE) is the HXXXXD motif element. 3 EF-hand domains span residues 426 to 455 (KRIF…VLTQ), 457 to 492 (LFKQ…TIPN), and 493 to 528 (LNKD…NPLL). Positions 470, 472, 474, 476, 481, 506, 508, 510, 512, and 517 each coordinate Ca(2+).

Belongs to the 1-acyl-sn-glycerol-3-phosphate acyltransferase family.

It localises to the golgi apparatus membrane. Its subcellular location is the late endosome membrane. The enzyme catalyses a 1-acyl-sn-glycero-3-phosphoethanolamine + an acyl-CoA = a 1,2-diacyl-sn-glycero-3-phosphoethanolamine + CoA. It catalyses the reaction a 1-acyl-sn-glycero-3-phosphocholine + an acyl-CoA = a 1,2-diacyl-sn-glycero-3-phosphocholine + CoA. It carries out the reaction a 1-acyl-sn-glycero-3-phospho-L-serine + an acyl-CoA = a 1,2-diacyl-sn-glycero-3-phospho-L-serine + CoA. Its pathway is lipid metabolism; phospholipid metabolism. Functionally, possesses acyl-CoA-dependent lysophospholipid acyltransferase activity with a subset of lysophospholipids as substrates. Exhibits strong acylation activity on lysophosphatidylethanolamine (LPE), and lower activity on lysophosphatidylcholine (LPC) and lysophosphatidylserine (LPS). Exhibits acylation activity on both LPE and LPC. Has a preference for 18:1-LPE over 16:0-LPE as acceptor. Palmitoyl-CoA (16:0-CoA) is a better acyl donor than oleoyl-CoA (18:1-CoA). Among several different acyl-CoA species the best acyl donor is eicosanoyl-CoA (20:0-CoA). Activity is calcium-independent. Its activity is essential for maintaining adequate levels of phosphatidylethanolamine (PE), LPE and LPC in the cells, which is crucial for plant growth regulation. The chain is Lysophospholipid acyltransferase LPEAT2 from Arabidopsis thaliana (Mouse-ear cress).